The following is a 635-amino-acid chain: Sodium- and chloride-dependent creatine transporter 1 (635 aa).

The tract at residues 1–28 (MAKKSAENGIYSVSGDEKKGPLIAPGPD) is disordered. Over 1 to 60 (MAKKSAENGIYSVSGDEKKGPLIAPGPDGAPAKGDGPVGLGTPGGRLAVPPRETWTRQMD) the chain is Cytoplasmic. Thr42 carries the post-translational modification Phosphothreonine. Residues 61–81 (FIMSCVGFAVGLGNVWRFPYL) form a helical membrane-spanning segment. The Extracellular portion of the chain corresponds to 82 to 87 (CYKNGG). A helical membrane pass occupies residues 88 to 108 (GVFLIPYVLIALVGGIPIFFL). At 109–138 (EISLGQFMKAGSINVWNICPLFKGLGYASM) the chain is on the cytoplasmic side. The chain crosses the membrane as a helical span at residues 139–159 (VIVFYCNTYYIMVLAWGFYYL). Residues 160–230 (VKSFTTTLPW…LSGGLEVPGA (71 aa)) lie on the Extracellular side of the membrane. N-linked (GlcNAc...) asparagine glycans are attached at residues Asn192 and Asn197. A helical transmembrane segment spans residues 231–251 (LNWEVTLCLLACWVLVYFCVW). At 252 to 269 (KGVKSTGKIVYFTATFPY) the chain is on the cytoplasmic side. The helical transmembrane segment at 270 to 290 (VVLVVLLVRGVLLPGALDGII) threads the bilayer. The Extracellular portion of the chain corresponds to 291–304 (YYLKPDWSKLGSPQ). The chain crosses the membrane as a helical span at residues 305-325 (VWIDAGTQIFFSYAIGLGALT). Residues 326–341 (ALGSYNRFNNNCYKDA) lie on the Cytoplasmic side of the membrane. Residues 342–362 (IILALINSGTSFFAGFVVFSI) form a helical membrane-spanning segment. Residues 363–394 (LGFMAAEQGVHISKVAESGPGLAFIAYPRAVT) lie on the Extracellular side of the membrane. Residues 395-415 (LMPVAPLWAALFFFMLLLLGL) form a helical membrane-spanning segment. The Cytoplasmic portion of the chain corresponds to 416 to 444 (DSQFVGVEGFITGLLDLLPASYYFRFQRE). Residues 445-465 (ISVALCCALCFVIDLSMVTDG) form a helical membrane-spanning segment. At 466–479 (GMYVFQLFDYYSAS) the chain is on the extracellular side. The helical transmembrane segment at 480–500 (GTTLLWQAFWECVVVAWVYGA) threads the bilayer. Residues 501-520 (DRFMDDIACMIGYRPCPWMK) are Cytoplasmic-facing. A helical transmembrane segment spans residues 521–541 (WCWSFFTPLVCMGIFIFNVVY). Topologically, residues 542–560 (YEPLVYNNTYVYPWWGEAM) are extracellular. Asn548 carries an N-linked (GlcNAc...) asparagine glycan. A helical membrane pass occupies residues 561-581 (GWAFALSSMLCVPLHLLGCLL). The Cytoplasmic portion of the chain corresponds to 582-635 (RAKGTMAERWQHLTQPIWGLHHLEYRAQDADVRGLTTLTPVSESSKVVVVESVM). Phosphothreonine is present on residues Thr617 and Thr620. At Ser623 the chain carries Phosphoserine.

Belongs to the sodium:neurotransmitter symporter (SNF) (TC 2.A.22) family. SLC6A8 subfamily. In terms of processing, glycosylated. As to expression, predominantly expressed in skeletal muscle and kidney. Also found in brain, heart, colon, testis and prostate.

The protein resides in the cell membrane. It localises to the apical cell membrane. The enzyme catalyses creatine(out) + chloride(out) + 2 Na(+)(out) = creatine(in) + chloride(in) + 2 Na(+)(in). In terms of biological role, creatine:sodium symporter which mediates the uptake of creatine. Plays an important role in supplying creatine to the brain via the blood-brain barrier. The sequence is that of Sodium- and chloride-dependent creatine transporter 1 (SLC6A8) from Homo sapiens (Human).